The sequence spans 614 residues: Aspartate--tRNA ligase (614 aa).

An L-aspartate-binding site is contributed by Glu174. An aspartate region spans residues 198-201 (QLFK). An L-aspartate-binding site is contributed by Arg220. ATP-binding positions include 220-222 (RDE) and Gln229. L-aspartate is bound at residue His448. Position 482 (Glu482) interacts with ATP. Arg489 provides a ligand contact to L-aspartate. 534-537 (GLDR) lines the ATP pocket.

Belongs to the class-II aminoacyl-tRNA synthetase family. Type 1 subfamily. In terms of assembly, homodimer.

The protein resides in the cytoplasm. It catalyses the reaction tRNA(Asp) + L-aspartate + ATP = L-aspartyl-tRNA(Asp) + AMP + diphosphate. In terms of biological role, catalyzes the attachment of L-aspartate to tRNA(Asp) in a two-step reaction: L-aspartate is first activated by ATP to form Asp-AMP and then transferred to the acceptor end of tRNA(Asp). The sequence is that of Aspartate--tRNA ligase from Lactobacillus acidophilus (strain ATCC 700396 / NCK56 / N2 / NCFM).